The chain runs to 210 residues: DNA-directed RNA polymerases I, II, and III subunit RPABC1 (210 aa).

M1 bears the N-acetylmethionine mark. A Glycyl lysine isopeptide (Lys-Gly) (interchain with G-Cter in SUMO2) cross-link involves residue K81.

This sequence belongs to the archaeal Rpo5/eukaryotic RPB5 RNA polymerase subunit family. As to quaternary structure, component of the RNA polymerase I (Pol I), RNA polymerase II (Pol II) and RNA polymerase III (Pol III) complexes consisting of at least 13, 12 and 17 subunits, respectively. Pol I complex consists of a ten-subunit catalytic core composed of POLR1A/RPA1, POLR1B/RPA2, POLR1C/RPAC1, POLR1D/RPAC2, POLR1H/RPA12, POLR2E/RPABC1, POLR2F/RPABC2, POLR2H/RPABC3, POLR2K/RPABC4 and POLR2L/RPABC5; a mobile stalk subunit POLR1F/RPA43 protruding from the core and additional subunits homologous to general transcription factors POLR1E/RPA49 and POLR1G/RPA34. Part of Pol I pre-initiation complex (PIC), in which Pol I core assembles with RRN3 and promoter-bound UTBF and SL1/TIF-IB complex. Pol II complex contains a ten-subunit catalytic core composed of POLR2A/RPB1, POLR2B/RPB2, POLR2C/RPB3, POLR2I/RPB9, POLR2J/RPB11, POLR2E/RPABC1, POLR2F/RPABC2, POLR2H/RPABC3, POLR2K/RPABC4 and POLR2L/RPABC5 and a mobile stalk composed of two subunits POLR2D/RPB4 and POLR2G/RPB7. Part of Pol II(G) complex, in which Pol II core associates with an additional subunit POLR2M; unlike conventional Pol II, Pol II(G) functions as a transcriptional repressor. Part of TBP-based Pol II pre-initiation complex (PIC), in which Pol II core assembles with general transcription factors and other specific initiation factors including GTF2E1, GTF2E2, GTF2F1, GTF2F2, TCEA1, ERCC2, ERCC3, GTF2H2, GTF2H3, GTF2H4, GTF2H5, GTF2A1, GTF2A2, GTF2B and TBP; this large multi-subunit PIC complex mediates DNA unwinding and targets Pol II core to the transcription start site where the first phosphodiester bond forms. In Pol II complex, this subunit is present in 2-fold molar excess over the other subunits. Pol III complex consists of a ten-subunit catalytic core composed of POLR3A/RPC1, POLR3B/RPC2, POLR1C/RPAC1, POLR1D/RPAC2, POLR3K/RPC10, POLR2E/RPABC1, POLR2F/RPABC2, POLR2H/RPABC3, POLR2K/RPABC4 and POLR2L/RPABC5; a mobile stalk composed of two subunits POLR3H/RPC8 and CRCP/RPC9, protruding from the core and functioning primarily in transcription initiation; and additional subunits homologous to general transcription factors of the RNA polymerase II machinery, POLR3C/RPC3-POLR3F/RPC6-POLR3G/RPC7 heterotrimer required for transcription initiation and POLR3D/RPC4-POLR3E/RPC5 heterodimer involved in both transcription initiation and termination. Component of the PAQosome complex which is responsible for the biogenesis of several protein complexes and which consists of R2TP complex members RUVBL1, RUVBL2, RPAP3 and PIH1D1, URI complex members PFDN2, PFDN6, PDRG1, UXT and URI1 as well as ASDURF, POLR2E and DNAAF10/WDR92. Interacts with URI1. In terms of assembly, (Microbial infection) Interacts with HBV protein X.

The protein resides in the nucleus. Its subcellular location is the nucleolus. Functionally, DNA-dependent RNA polymerase catalyzes the transcription of DNA into RNA using the four ribonucleoside triphosphates as substrates. Common component of RNA polymerases I, II and III which synthesize ribosomal RNA precursors, mRNA precursors and many functional non-coding RNAs, and small RNAs, such as 5S rRNA and tRNAs, respectively. Pol II is the central component of the basal RNA polymerase II transcription machinery. Pols are composed of mobile elements that move relative to each other. In Pol II, POLR2E/RPABC1 is part of the lower jaw surrounding the central large cleft and thought to grab the incoming DNA template. This chain is DNA-directed RNA polymerases I, II, and III subunit RPABC1, found in Homo sapiens (Human).